The primary structure comprises 168 residues: Phosphopantetheine adenylyltransferase (168 aa).

Threonine 14 serves as a coordination point for substrate. ATP contacts are provided by residues 14 to 15 and histidine 22; that span reads TF. Substrate is bound by residues lysine 46, leucine 78, and arginine 92. ATP is bound by residues 93-95, glutamate 103, and 128-134; these read GLR and YSFISSS.

The protein belongs to the bacterial CoaD family. In terms of assembly, homohexamer. It depends on Mg(2+) as a cofactor.

Its subcellular location is the cytoplasm. It catalyses the reaction (R)-4'-phosphopantetheine + ATP + H(+) = 3'-dephospho-CoA + diphosphate. The protein operates within cofactor biosynthesis; coenzyme A biosynthesis; CoA from (R)-pantothenate: step 4/5. Its function is as follows. Reversibly transfers an adenylyl group from ATP to 4'-phosphopantetheine, yielding dephospho-CoA (dPCoA) and pyrophosphate. In Xanthomonas euvesicatoria pv. vesicatoria (strain 85-10) (Xanthomonas campestris pv. vesicatoria), this protein is Phosphopantetheine adenylyltransferase.